A 295-amino-acid chain; its full sequence is Ribosomal protein L11 methyltransferase (295 aa).

Residues Thr150, Gly171, Asp193, and Asn232 each coordinate S-adenosyl-L-methionine.

This sequence belongs to the methyltransferase superfamily. PrmA family.

It localises to the cytoplasm. The enzyme catalyses L-lysyl-[protein] + 3 S-adenosyl-L-methionine = N(6),N(6),N(6)-trimethyl-L-lysyl-[protein] + 3 S-adenosyl-L-homocysteine + 3 H(+). In terms of biological role, methylates ribosomal protein L11. The sequence is that of Ribosomal protein L11 methyltransferase from Neisseria gonorrhoeae (strain ATCC 700825 / FA 1090).